The sequence spans 337 residues: Autophagy protein 5 (337 aa).

Lys-128 participates in a covalent cross-link: Glycyl lysine isopeptide (Lys-Gly) (interchain with G-Cter in ATG12). A disordered region spans residues 271–290 (RAQTSGEERSIDDTEEADGS). Over residues 276-290 (GEERSIDDTEEADGS) the composition is skewed to basic and acidic residues.

This sequence belongs to the ATG5 family. Conjugated to ATG12. Conjugated to ATG12; which is essential for autophagy. Conjugation with ATG12 involves ATG7 as an E1-like activating enzyme and ATG10 as an E2-like conjugating enzyme. In terms of tissue distribution, ubiquitous.

It localises to the cytoplasm. Functionally, required for autophagy. Conjugation to ATG12 is essential for plant nutrient recycling. Involved in a negative feedback loop that modulates NPR1-dependent salicylic acid (SA) signaling and limits senescence and immunity-related programmed cell death (PCD) in plants. Involved in complete proteolysis of chloroplast stroma proteins in senescent leaves. Involved in the degradation of damaged peroxisomes. The protein is Autophagy protein 5 of Arabidopsis thaliana (Mouse-ear cress).